Consider the following 154-residue polypeptide: 17.4 kDa class I heat shock protein (154 aa).

The 115-residue stretch at 40-154 folds into the sHSP domain; the sequence is DAAAFAGARI…PDVKSIQITG (115 aa).

Belongs to the small heat shock protein (HSP20) family. May form oligomeric structures.

It is found in the cytoplasm. This is 17.4 kDa class I heat shock protein (HSP17.4) from Oryza sativa subsp. japonica (Rice).